A 175-amino-acid chain; its full sequence is Ribulose bisphosphate carboxylase small subunit, chloroplastic 2 (175 aa).

The N-terminal 46 residues, 1 to 46 (MAPAVMASSATTVAPFQGLKSTAGLPISCRSGSTGLSSVSNGGRIR), are a transit peptide targeting the chloroplast.

This sequence belongs to the RuBisCO small chain family. Heterohexadecamer of 8 large and 8 small subunits.

The protein resides in the plastid. It is found in the chloroplast. Functionally, ruBisCO catalyzes two reactions: the carboxylation of D-ribulose 1,5-bisphosphate, the primary event in carbon dioxide fixation, as well as the oxidative fragmentation of the pentose substrate. Both reactions occur simultaneously and in competition at the same active site. Although the small subunit is not catalytic it is essential for maximal activity. This Triticum aestivum (Wheat) protein is Ribulose bisphosphate carboxylase small subunit, chloroplastic 2.